Here is a 342-residue protein sequence, read N- to C-terminus: Heat-inducible transcription repressor HrcA (342 aa).

The protein belongs to the HrcA family.

Its function is as follows. Negative regulator of class I heat shock genes (grpE-dnaK-dnaJ and groELS operons). Prevents heat-shock induction of these operons. This Mesoplasma florum (strain ATCC 33453 / NBRC 100688 / NCTC 11704 / L1) (Acholeplasma florum) protein is Heat-inducible transcription repressor HrcA.